Reading from the N-terminus, the 119-residue chain is Ribonuclease P protein component (119 aa).

This sequence belongs to the RnpA family. In terms of assembly, consists of a catalytic RNA component (M1 or rnpB) and a protein subunit.

It carries out the reaction Endonucleolytic cleavage of RNA, removing 5'-extranucleotides from tRNA precursor.. In terms of biological role, RNaseP catalyzes the removal of the 5'-leader sequence from pre-tRNA to produce the mature 5'-terminus. It can also cleave other RNA substrates such as 4.5S RNA. The protein component plays an auxiliary but essential role in vivo by binding to the 5'-leader sequence and broadening the substrate specificity of the ribozyme. In Beutenbergia cavernae (strain ATCC BAA-8 / DSM 12333 / CCUG 43141 / JCM 11478 / NBRC 16432 / NCIMB 13614 / HKI 0122), this protein is Ribonuclease P protein component.